The following is a 345-amino-acid chain: MLAARLVCLRTLPSRVFHPAFTKASPVVKNSITKNQWLLTPSREYATKTRIGIRRGRTGQELKEAALEPSMEKIFKIDQMGRWFVAGGAAVGLGALCYYGLGLSNEIGAIEKAVIWPQYVKDRIHSTYMYLAGSIGLTALSAIAISRTPVLMNFMMRGSWVTIGVTFAAMVGAGMLVRSIPYDQSPGPKHLAWLLHSGVMGAVVAPLTILGGPLLIRAAWYTAGIVGGLSTVAMCAPSEKFLNMGAPLGVGLGLVFVSSLGSMFLPPTTVAGATLYSVAMYGGLVLFSMFLLYDTQKVIKRAEVSPMYGVQKYDPINSMLSIYMDTLNIFMRVATMLATGGNRKK.

A mitochondrion-targeting transit peptide spans methionine 1–tyrosine 45. Over alanine 46–arginine 82 the chain is Mitochondrial matrix. Residues tryptophan 83–leucine 103 form a helical membrane-spanning segment. At serine 104–histidine 125 the chain is on the mitochondrial intermembrane side. The helical transmembrane segment at serine 126–serine 146 threads the bilayer. Over arginine 147–serine 159 the chain is Mitochondrial matrix. Residues tryptophan 160–isoleucine 180 form a helical membrane-spanning segment. The Mitochondrial intermembrane portion of the chain corresponds to proline 181–histidine 190. The helical transmembrane segment at leucine 191–glycine 211 threads the bilayer. At glycine 212–proline 213 the chain is on the mitochondrial matrix side. A helical membrane pass occupies residues leucine 214–methionine 234. At cysteine 235 to methionine 244 the chain is on the mitochondrial intermembrane side. Residues glycine 245 to leucine 265 traverse the membrane as a helical segment. At proline 266 to alanine 271 the chain is on the mitochondrial matrix side. A helical membrane pass occupies residues glycine 272–leucine 292. The Mitochondrial intermembrane portion of the chain corresponds to tyrosine 293–lysine 345.

Belongs to the BI1 family. In terms of assembly, interacts with LETM1. Interacts with AFG3L2. Post-translationally, undergoes AFG3L2-mediated proteolytic degradation, upon hyperpolarization of mitochondria.

It localises to the mitochondrion inner membrane. It carries out the reaction Ca(2+)(in) + 2 H(+)(out) = Ca(2+)(out) + 2 H(+)(in). The enzyme catalyses K(+)(in) + H(+)(out) = K(+)(out) + H(+)(in). In terms of biological role, plays an important role in maintenance of mitochondrial morphology and in mediating either calcium or potassium/proton antiport. Mediates proton-dependent calcium efflux from mitochondrion. Also functions as an electroneutral mitochondrial proton/potassium exchanger. Required for the mitochondrial tubular network and cristae organization. Involved in apoptotic release of cytochrome c. Inhibits the proteolytic activity of AFG3L2, stimulating respiration and stabilizing respiratory enzymes in actively respiring mitochondria. However, when mitochondria become hyperpolarized, GHITM loses its inhibitory activity toward AFG3L2 and the now the active AFG3L2 turns first on GHITM and, if hyperpolarization persists, on other proteins of the mitochondria, leading to a broad remodeling of the mitochondrial proteome. This chain is Growth hormone-inducible transmembrane protein (GHITM), found in Homo sapiens (Human).